The sequence spans 247 residues: tRNA (guanine-N(1)-)-methyltransferase (247 aa).

Residues Gly-112 and 132 to 137 (IGDFVL) contribute to the S-adenosyl-L-methionine site.

This sequence belongs to the RNA methyltransferase TrmD family. In terms of assembly, homodimer.

It localises to the cytoplasm. The catalysed reaction is guanosine(37) in tRNA + S-adenosyl-L-methionine = N(1)-methylguanosine(37) in tRNA + S-adenosyl-L-homocysteine + H(+). Its function is as follows. Specifically methylates guanosine-37 in various tRNAs. The polypeptide is tRNA (guanine-N(1)-)-methyltransferase (Geotalea uraniireducens (strain Rf4) (Geobacter uraniireducens)).